The primary structure comprises 82 residues: Cytochrome b-c1 complex subunit 8 (82 aa).

At 1-39 (MGREFGNLTRMRHVITYSLSPFEQRAFPHYFSKGIPNVL) the chain is on the mitochondrial matrix side. K33 bears the N6-acetyllysine; alternate mark. K33 carries the N6-succinyllysine; alternate modification. A helical membrane pass occupies residues 40–68 (RRMRACVLRVVPPFVAFYLVYTWGTQEFE). Residues 69 to 82 (NSKRKNPAAYENDK) are Mitochondrial intermembrane-facing.

The protein belongs to the UQCRQ/QCR8 family. Component of the ubiquinol-cytochrome c oxidoreductase (cytochrome b-c1 complex, complex III, CIII), a multisubunit enzyme composed of 11 subunits. The complex is composed of 3 respiratory subunits cytochrome b, cytochrome c1 and Rieske protein UQCRFS1, 2 core protein subunits UQCRC1/QCR1 and UQCRC2/QCR2, and 6 low-molecular weight protein subunits UQCRH/QCR6, UQCRB/QCR7, UQCRQ/QCR8, UQCR10/QCR9, UQCR11/QCR10 and subunit 9, the cleavage product of Rieske protein UQCRFS1. The complex exists as an obligatory dimer and forms supercomplexes (SCs) in the inner mitochondrial membrane with NADH-ubiquinone oxidoreductase (complex I, CI) and cytochrome c oxidase (complex IV, CIV), resulting in different assemblies (supercomplex SCI(1)III(2)IV(1) and megacomplex MCI(2)III(2)IV(2)). Interacts with UQCC6.

The protein localises to the mitochondrion inner membrane. Functionally, component of the ubiquinol-cytochrome c oxidoreductase, a multisubunit transmembrane complex that is part of the mitochondrial electron transport chain which drives oxidative phosphorylation. The respiratory chain contains 3 multisubunit complexes succinate dehydrogenase (complex II, CII), ubiquinol-cytochrome c oxidoreductase (cytochrome b-c1 complex, complex III, CIII) and cytochrome c oxidase (complex IV, CIV), that cooperate to transfer electrons derived from NADH and succinate to molecular oxygen, creating an electrochemical gradient over the inner membrane that drives transmembrane transport and the ATP synthase. The cytochrome b-c1 complex catalyzes electron transfer from ubiquinol to cytochrome c, linking this redox reaction to translocation of protons across the mitochondrial inner membrane, with protons being carried across the membrane as hydrogens on the quinol. In the process called Q cycle, 2 protons are consumed from the matrix, 4 protons are released into the intermembrane space and 2 electrons are passed to cytochrome c. This Ailuropoda melanoleuca (Giant panda) protein is Cytochrome b-c1 complex subunit 8 (UQCRQ).